Reading from the N-terminus, the 368-residue chain is Histidinol-phosphate aminotransferase (368 aa).

K226 bears the N6-(pyridoxal phosphate)lysine mark.

The protein belongs to the class-II pyridoxal-phosphate-dependent aminotransferase family. Histidinol-phosphate aminotransferase subfamily. As to quaternary structure, homodimer. Pyridoxal 5'-phosphate is required as a cofactor.

The enzyme catalyses L-histidinol phosphate + 2-oxoglutarate = 3-(imidazol-4-yl)-2-oxopropyl phosphate + L-glutamate. It participates in amino-acid biosynthesis; L-histidine biosynthesis; L-histidine from 5-phospho-alpha-D-ribose 1-diphosphate: step 7/9. This is Histidinol-phosphate aminotransferase from Colwellia psychrerythraea (strain 34H / ATCC BAA-681) (Vibrio psychroerythus).